Consider the following 264-residue polypeptide: MAATGEALTPQGYIQHHLTNLHVGEGFWTWHIDSLFFSVGLGVLFLWIFRSVGKKATSGVPGKLQCFIEMIVEFVDNSVKESFHGRNALIAPLALTIFVWVFMMNFMDMLPVDWLPWLASLAGVPYLKVVPTTDVNITFSLAIGVFVLIIYYSIKVKGVSGFVKELTLQPFNHKAMIPVNLLLETVTLIAKPISLALRLFGNLYAGELIFILIALMYGTNLLLSSLGVTLQLGWLIFHILVITLQAFIFMMLTIVYLSMAHEDH.

The next 6 helical transmembrane spans lie at threonine 29–phenylalanine 49, asparagine 87–methionine 107, aspartate 134–isoleucine 154, isoleucine 177–leucine 197, leucine 208–valine 228, and leucine 235–valine 255.

It belongs to the ATPase A chain family. In terms of assembly, F-type ATPases have 2 components, CF(1) - the catalytic core - and CF(0) - the membrane proton channel. CF(1) has five subunits: alpha(3), beta(3), gamma(1), delta(1), epsilon(1). CF(0) has three main subunits: a(1), b(2) and c(9-12). The alpha and beta chains form an alternating ring which encloses part of the gamma chain. CF(1) is attached to CF(0) by a central stalk formed by the gamma and epsilon chains, while a peripheral stalk is formed by the delta and b chains.

Its subcellular location is the cell inner membrane. In terms of biological role, key component of the proton channel; it plays a direct role in the translocation of protons across the membrane. This is ATP synthase subunit a from Shewanella sp. (strain MR-4).